A 449-amino-acid chain; its full sequence is GTPase Der (449 aa).

EngA-type G domains lie at 4–169 and 177–353; these read PIVA…PAGE and IQVA…EQHR. GTP contacts are provided by residues 10–17, 57–61, 120–123, 183–190, 230–234, and 295–298; these read GRPNVGKS, DTGGL, NKCE, DTAGI, and NKWD. Residues 354 to 439 form the KH-like domain; that stretch reads RRVTTAVVND…PIRLLWRSKK (86 aa).

This sequence belongs to the TRAFAC class TrmE-Era-EngA-EngB-Septin-like GTPase superfamily. EngA (Der) GTPase family. As to quaternary structure, associates with the 50S ribosomal subunit.

In terms of biological role, GTPase that plays an essential role in the late steps of ribosome biogenesis. The sequence is that of GTPase Der from Thermosynechococcus vestitus (strain NIES-2133 / IAM M-273 / BP-1).